A 447-amino-acid chain; its full sequence is Phosphoglucosamine mutase (447 aa).

S100 serves as the catalytic Phosphoserine intermediate. Mg(2+) is bound by residues S100, D239, D241, and D243. A Phosphoserine modification is found at S100.

The protein belongs to the phosphohexose mutase family. Mg(2+) serves as cofactor. Post-translationally, activated by phosphorylation.

The catalysed reaction is alpha-D-glucosamine 1-phosphate = D-glucosamine 6-phosphate. Catalyzes the conversion of glucosamine-6-phosphate to glucosamine-1-phosphate. The protein is Phosphoglucosamine mutase of Caldanaerobacter subterraneus subsp. tengcongensis (strain DSM 15242 / JCM 11007 / NBRC 100824 / MB4) (Thermoanaerobacter tengcongensis).